The chain runs to 701 residues: MATYKVKVATGTDFFSGTLDSISLTIVGTQGESHKQRLNHFGRDFATGAVDDYTVQCQQDLGELIIIRLHKEPHSFLPKDPWYCNYVQICAPNCRVYHFPAYQWMDGYETLSLREATGKTTADDTLPILLEHRQEEIRAKKDFYHWRVFVPGLPNYVDIPSYHPPPRRCRNPNRPEWNGYIPGFPILINIKATRFLNLNLRFSFVKTASFFYRLGPMALAFKLRGLVDRKRSWKRLKDIKNIFPATKTVVSEYVAEHWTEDSFFGYQYLNGINPGHIRRCMQIPDKFPVTDEMVAPFLGEGTCLQAELEKGNIYLADYRILDGIPTVELNGQKQHHCAPICLLHFGPDGNMMPIAIQLSQTPGPDCPIFLPNDSEWDWLLAKTWVRYAEFYSHEAVAHLLESHLIGEAFCLALLRNLPMCHPLYKLLIPHTRYNVQINSIGRALLLNKGGLSARAMSLGLEGFAQVMVRGLSELTYKSLCIPNDFVERGVQDLPGYYFRDDSLAVWYAMERYVTEIITYYYPNDAAVEGDPELQCWVQEIFKECLLERESSGFPTCLRTVPELIEYVTMVMYTCSARHAAVNTGQLEYTSWMPNFPSSMRNPPMQSKGLTTLQTFMDTLPDVKTTCIVLLVLWTLCREPDDRRPLGHFPDIHFVEEAPRRSMEAFRQNLNQISHNIRQRNKCLNLPYYYLDPVLIENSISI.

Residues 2–119 (ATYKVKVATG…TLSLREATGK (118 aa)) enclose the PLAT domain. Residues 120–701 (TTADDTLPIL…PVLIENSISI (582 aa)) form the Lipoxygenase domain. Residues H398, H403, H578, N582, and I701 each contribute to the Fe cation site.

This sequence belongs to the lipoxygenase family. Requires Fe cation as cofactor.

The protein resides in the cytoplasm. It localises to the perinuclear region. It carries out the reaction (5Z,8Z,11Z,14Z)-eicosatetraenoate + O2 = (12R)-hydroperoxy-(5Z,8Z,10E,14Z)-eicosatetraenoate. It catalyses the reaction N-[omega-(9Z,12Z)-octadecadienoyloxy]acyl-beta-D-glucosyl-(1&lt;-&gt;1)-octadecasphing-4E-enine + O2 = N-[omega-(9R)-hydroperoxy-(10E,12Z)-octadecadienoyloxy]acyl-beta-D-glucosyl-(1&lt;-&gt;1)-octadecasphing-4E-enine. The catalysed reaction is a N-[omega-(9Z,12Z)-octadecadienoyloxy]-acylsphin-4E-enine + O2 = a N-[omega-(9R)-hydroperoxy-(10E,12Z)-octadecadienoyloxy]-acylsphin-4E-enine. The enzyme catalyses (6Z,9Z,12Z)-octadecatrienoate + O2 = 10-hydroperoxy-(6Z,8E,12Z)-octadecatrienoate. It carries out the reaction (4Z,7Z,10Z,13Z,16Z,19Z)-docosahexaenoate + O2 = 14-hydroperoxy-(4Z,7Z,10Z,12E,16Z,19Z)-docosahexaenoate. It catalyses the reaction (8Z,11Z,14Z)-eicosatrienoate + O2 = (8Z,10E,14Z)-12-hydroperoxyeicosatrienoate. The catalysed reaction is (5Z,8Z,11Z,14Z,17Z)-eicosapentaenoate + O2 = (5Z,7Z,8Z,10E,14Z,17Z)-12-hydroperoxyeicosapentaenoate. The enzyme catalyses (6Z,9Z,12Z)-octadecatrienoate + O2 = 10R-hydroperoxy-(6Z,8E,12Z)-octadecatrienoate. It carries out the reaction 1-O-methyl-(5Z,8Z,11Z,14Z)-eicosatetraenoate + O2 = 1-O-methyl (5Z,8Z,10E,12R,14Z)-hydroperoxyiecosatetraenoate. It catalyses the reaction 1-O-methyl-(5Z,8Z,11Z,14Z)-eicosatetraenoate + O2 = 1-O-methyl-8-hydroperoxy-(5Z,9E,11Z,14Z)-eicosatetraenoate. The catalysed reaction is 1-O-methyl-(5Z,8Z,11Z,14Z)-eicosatetraenoate + O2 = 1-O-methyl-(8R)-hydroperoxy-(5Z,9E,11Z,14Z)-eicosatrienoate. The enzyme catalyses 1-O-methyl-(9Z,12Z)-octadecadienoate + O2 = 1-O-methyl-(9R)-hydroperoxy-(10E,12Z)-octadecadienoate. It carries out the reaction 1-O-methyl-20-hydroxy-(5Z,8Z,11Z,14Z)-eicosatetraenoate + O2 = 1-O-methyl-8-hydroperoxy-20-hydroxy-(5Z,9E,11Z,14Z)-eicosatetraenoate. It catalyses the reaction 1-O-methyl-20-hydroxy-(5Z,8Z,11Z,14Z)-eicosatetraenoate + O2 = 1-O-methyl-12-hydroperoxy-20-hydroxy-(5Z,8Z,10E,14Z)-eicosatetraenoate. The catalysed reaction is 1-O-methyl-20-hydroxy-(5Z,8Z,11Z,14Z)-eicosatetraenoate + O2 = 1-O-methyl-9-hydroperoxy-20-hydroxy-(5Z,7E,11Z,14Z)-eicosatetraenoate. The enzyme catalyses 1-O-methyl-(9Z,12Z)-octadecadienoate + O2 = 1-O-methyl-(13S)-hydroperoxy-(9Z,11E)-octadecadienoate. Its pathway is lipid metabolism; hydroperoxy eicosatetraenoic acid biosynthesis. The protein operates within lipid metabolism; sphingolipid metabolism. Its activity is regulated as follows. Increased by calcium. Catalyzes the regio and stereo-specific incorporation of a single molecule of dioxygen into free and esterified polyunsaturated fatty acids generating lipid hydroperoxides that can be further reduced to the corresponding hydroxy species. In the skin, acts upstream of ALOXE3 on the lineolate moiety of esterified omega-hydroxyacyl-sphingosine (EOS) ceramides to produce an epoxy-ketone derivative, a crucial step in the conjugation of omega-hydroxyceramide to membrane proteins. Therefore plays a crucial role in the synthesis of corneocytes lipid envelope and the establishment of the skin barrier to water loss. May also play a role in the regulation of the expression of airway mucins. The polypeptide is Arachidonate 12-lipoxygenase, 12R-type (Rattus norvegicus (Rat)).